The primary structure comprises 188 residues: Probable DNA-directed RNA polymerase subunit delta (188 aa).

An HTH HARE-type domain is found at 14-83 (LSMIEVARAI…GDNKWGLRSW (70 aa)). The tract at residues 117–188 (GDEDAIDYSD…EDDEDDEEEE (72 aa)) is disordered.

This sequence belongs to the RpoE family. RNAP is composed of a core of 2 alpha, a beta and a beta' subunits. The core is associated with a delta subunit and one of several sigma factors.

In terms of biological role, participates in both the initiation and recycling phases of transcription. In the presence of the delta subunit, RNAP displays an increased specificity of transcription, a decreased affinity for nucleic acids, and an increased efficiency of RNA synthesis because of enhanced recycling. The sequence is that of Probable DNA-directed RNA polymerase subunit delta from Streptococcus uberis (strain ATCC BAA-854 / 0140J).